The primary structure comprises 33 residues: GFFAFIPKIISSPLFKTLLSAVGSALSSSGEQE.

Belongs to the pardaxin family. In aqueous solution exists as a tetramer.

It localises to the secreted. The protein resides in the target cell membrane. Exhibits unusual shark repellent and surfactant properties. Forms voltage-dependent, ion-permeable channels in membranes. At high concentration causes cell membrane lysis. The polypeptide is Pardaxin P-3 (Pardachirus pavoninus (Peacock sole)).